Consider the following 392-residue polypeptide: Major outer membrane porin (392 aa).

The signal sequence occupies residues 1 to 22 (MKKLLKSALLFAAAGSALSLQA).

It belongs to the chlamydial porin (CP) (TC 1.B.2) family. As to quaternary structure, part of a disulfide cross-linked outer membrane complex (COMC) composed of the major outer membrane porin (MOMP), the small cysteine-rich protein (OmcA) and the large cysteine-rich periplasmic protein (OmcB).

The protein resides in the cell outer membrane. Functionally, in elementary bodies (EBs, the infectious stage, which is able to survive outside the host cell) provides the structural integrity of the outer envelope through disulfide cross-links with the small cysteine-rich protein and the large cysteine-rich periplasmic protein. It has been described in publications as the Sarkosyl-insoluble COMC (Chlamydia outer membrane complex), and serves as the functional equivalent of peptidoglycan. Its function is as follows. Permits diffusion of specific solutes through the outer membrane. This Chlamydia psittaci (Chlamydophila psittaci) protein is Major outer membrane porin (ompA).